The chain runs to 102 residues: Small ribosomal subunit protein uS14 (102 aa).

It belongs to the universal ribosomal protein uS14 family. Part of the 30S ribosomal subunit. Contacts proteins S3 and S10.

Its function is as follows. Binds 16S rRNA, required for the assembly of 30S particles and may also be responsible for determining the conformation of the 16S rRNA at the A site. The protein is Small ribosomal subunit protein uS14 of Wolbachia sp. subsp. Brugia malayi (strain TRS).